The sequence spans 430 residues: 3-phosphoshikimate 1-carboxyvinyltransferase (430 aa).

Residues K33, S34, and R38 each contribute to the 3-phosphoshikimate site. Residue K33 participates in phosphoenolpyruvate binding. The phosphoenolpyruvate site is built by G101 and R129. 3-phosphoshikimate-binding residues include S172, S173, Q174, S201, E319, and H346. Q174 provides a ligand contact to phosphoenolpyruvate. The active-site Proton acceptor is E319. Phosphoenolpyruvate-binding residues include R350, R391, and K416.

It belongs to the EPSP synthase family. Monomer.

It is found in the cytoplasm. The enzyme catalyses 3-phosphoshikimate + phosphoenolpyruvate = 5-O-(1-carboxyvinyl)-3-phosphoshikimate + phosphate. Its pathway is metabolic intermediate biosynthesis; chorismate biosynthesis; chorismate from D-erythrose 4-phosphate and phosphoenolpyruvate: step 6/7. In terms of biological role, catalyzes the transfer of the enolpyruvyl moiety of phosphoenolpyruvate (PEP) to the 5-hydroxyl of shikimate-3-phosphate (S3P) to produce enolpyruvyl shikimate-3-phosphate and inorganic phosphate. The protein is 3-phosphoshikimate 1-carboxyvinyltransferase of Corynebacterium glutamicum (strain ATCC 13032 / DSM 20300 / JCM 1318 / BCRC 11384 / CCUG 27702 / LMG 3730 / NBRC 12168 / NCIMB 10025 / NRRL B-2784 / 534).